The sequence spans 2215 residues: Unconventional myosin-VIIa (2215 aa).

In terms of domain architecture, Myosin motor spans 65 to 741 (HGVEDMIRLG…HDMLLEVERD (677 aa)). Position 158-165 (158-165 (GESGAGKT)) interacts with ATP. An actin-binding region spans residues 632-639 (FVRCIKPN). 5 IQ domains span residues 745-765 (TDRV…SNFL), 768-788 (KNAA…KNYG), 791-811 (RLGF…QQYR), 814-834 (RQRI…KAFR), and 837-857 (LWAV…RLHQ). The SAH stretch occupies residues 858-935 (RLRAEYLWRL…LEQMERARHE (78 aa)). A MyTH4 1 domain is found at 1017-1253 (YTRRPLKQPL…PSWLELQATK (237 aa)). The FERM 1 domain occupies 1258-1602 (IMLPVTFMDG…LVVTFLEGLR (345 aa)). Phosphoserine is present on Ser1569. Residue Thr1571 is modified to Phosphothreonine. The 70-residue stretch at 1603–1672 (KRSKYVVALQ…PTDSVYVMPT (70 aa)) folds into the SH3 domain. Residues 1747–1896 (HTREPLKQAL…PHLVEVEAIQ (150 aa)) enclose the MyTH4 2 domain. In terms of domain architecture, FERM 2 spans 1902–2205 (IFHKVYFPDD…SYISQMLTAM (304 aa)).

The protein belongs to the TRAFAC class myosin-kinesin ATPase superfamily. Myosin family. Might homodimerize in a two headed molecule through the formation of a coiled-coil rod. Identified in a complex with USH1C and USH1G. Interacts with MYRIP. Interacts with RPE65. Interacts with CIB2. May interact with CALM. Interacts with WHRN. Interacts with PLEKHB1 (via PH domain). Interacts with PCDH15. Interacts with TWF2. Interacts with USH1G. Interacts with MYH9. Interacts (via MyTH4-FERM domains) with cytoplasmic regions of ADGRV1 and USH2A. Interacts with PDZD7 (via MyTH4-FERM domains). Interacts with CALML4. Expressed in the pigment epithelium and the photoreceptor cells of the retina. Also found in kidney, liver, testis, cochlea, lymphocytes. Not expressed in brain.

Its subcellular location is the cytoplasm. The protein localises to the cell cortex. It is found in the cytoskeleton. It localises to the synapse. With respect to regulation, ATP hydrolysis is inhibited by Mg(2+), already at a concentration of 0.4 mM. Myosins are actin-based motor molecules with ATPase activity. Unconventional myosins serve in intracellular movements. Their highly divergent tails bind to membranous compartments, which are then moved relative to actin filaments. In the retina, plays an important role in the renewal of the outer photoreceptor disks. Plays an important role in the distribution and migration of retinal pigment epithelial (RPE) melanosomes and phagosomes, and in the regulation of opsin transport in retinal photoreceptors. In the inner ear, plays an important role in differentiation, morphogenesis and organization of cochlear hair cell bundles. Involved in hair-cell vesicle trafficking of aminoglycosides, which are known to induce ototoxicity. Motor protein that is a part of the functional network formed by USH1C, USH1G, CDH23 and MYO7A that mediates mechanotransduction in cochlear hair cells. Required for normal hearing. This is Unconventional myosin-VIIa from Homo sapiens (Human).